The sequence spans 141 residues: Large ribosomal subunit protein uL11 (141 aa).

It belongs to the universal ribosomal protein uL11 family. Part of the ribosomal stalk of the 50S ribosomal subunit. Interacts with L10 and the large rRNA to form the base of the stalk. L10 forms an elongated spine to which L12 dimers bind in a sequential fashion forming a multimeric L10(L12)X complex. One or more lysine residues are methylated.

Forms part of the ribosomal stalk which helps the ribosome interact with GTP-bound translation factors. The chain is Large ribosomal subunit protein uL11 from Chlorobaculum tepidum (strain ATCC 49652 / DSM 12025 / NBRC 103806 / TLS) (Chlorobium tepidum).